The following is a 76-amino-acid chain: Omega-conotoxin-like TeA61 (76 aa).

A signal peptide spans Met1 to Ala22. A propeptide spanning residues Asp23–Arg51 is cleaved from the precursor. Cystine bridges form between Cys52–Cys67, Cys59–Cys70, and Cys66–Cys75.

This sequence belongs to the conotoxin O1 superfamily. Expressed by the venom duct.

The protein localises to the secreted. Its function is as follows. Omega-conotoxins act at presynaptic membranes, they bind and block voltage-gated calcium channels (Cav). This chain is Omega-conotoxin-like TeA61, found in Conus textile (Cloth-of-gold cone).